A 234-amino-acid chain; its full sequence is MRRAVIIPARLGSTRLKEKPLKNLLGKPLIRWVVEGLVKTGERVILATDSERVKEVVEDLCEVFLTPSDLPSGSDRVLYVVRDLDVDLIINYQGDEPFVYEEDIKLIFRELEKGERVVTLARKDKEAYERPEDVKVVLDREGYALYFSRSPIPYFRKNDTFYPLKHVGIYGFRKETLMEFGAMPPSKLEQIEGLEQLRLLENGIKIKVLITENYYHGVDTEEDLKIVEEKLKNL.

This sequence belongs to the KdsB family.

Its subcellular location is the cytoplasm. The catalysed reaction is 3-deoxy-alpha-D-manno-oct-2-ulosonate + CTP = CMP-3-deoxy-beta-D-manno-octulosonate + diphosphate. Its pathway is nucleotide-sugar biosynthesis; CMP-3-deoxy-D-manno-octulosonate biosynthesis; CMP-3-deoxy-D-manno-octulosonate from 3-deoxy-D-manno-octulosonate and CTP: step 1/1. It participates in bacterial outer membrane biogenesis; lipopolysaccharide biosynthesis. In terms of biological role, activates KDO (a required 8-carbon sugar) for incorporation into bacterial lipopolysaccharide in Gram-negative bacteria. This Aquifex aeolicus (strain VF5) protein is 3-deoxy-manno-octulosonate cytidylyltransferase.